The chain runs to 872 residues: Translation initiation factor IF-2 (872 aa).

Over residues 130–155 (AEEEAARAAEEEAARLAEEEAARRAA) the composition is skewed to basic and acidic residues. The segment at 130–282 (AEEEAARAAE…RERERLKHMQ (153 aa)) is disordered. Over residues 156–181 (EPQSEPEAAAPAAEPVAPTAPVAAAP) the composition is skewed to low complexity. Over residues 182-194 (APAPATPVAPAQP) the composition is skewed to pro residues. Over residues 195–211 (KPVAAAAPAGDATAVPR) the composition is skewed to low complexity. A compositionally biased stretch (basic and acidic residues) spans 271–282 (RARERERLKHMQ). Positions 371-539 (TRPPVVTVMG…AILLQAEILD (169 aa)) constitute a tr-type G domain. The interval 380–387 (GHVDHGKT) is G1. 380 to 387 (GHVDHGKT) lines the GTP pocket. A G2 region spans residues 405–409 (GITQH). A G3 region spans residues 427–430 (DTPG). Residues 427-431 (DTPGH) and 481-484 (NKID) each bind GTP. The G4 stretch occupies residues 481–484 (NKID). The segment at 517–519 (SAK) is G5.

Belongs to the TRAFAC class translation factor GTPase superfamily. Classic translation factor GTPase family. IF-2 subfamily.

The protein localises to the cytoplasm. One of the essential components for the initiation of protein synthesis. Protects formylmethionyl-tRNA from spontaneous hydrolysis and promotes its binding to the 30S ribosomal subunits. Also involved in the hydrolysis of GTP during the formation of the 70S ribosomal complex. This is Translation initiation factor IF-2 from Paramagnetospirillum magneticum (strain ATCC 700264 / AMB-1) (Magnetospirillum magneticum).